The chain runs to 254 residues: H-2 class II histocompatibility antigen, I-E alpha chain (254 aa).

A signal peptide spans 1 to 24; that stretch reads RSRALILGVLALTTMLSLCGGEDD. The interval 25–109 is alpha-1; the sequence is IEADHVAFYG…KDSNFTPAAN (85 aa). Over 25-216 the chain is Extracellular; sequence IEADHVAFYG…IPAPMSELTE (192 aa). N-linked (GlcNAc...) asparagine glycosylation is found at Asn-103 and Asn-143. An alpha-2 region spans residues 110-203; the sequence is EAPQATVFPK…GLEEPVLKHW (94 aa). Positions 112 to 204 constitute an Ig-like C1-type domain; it reads PQATVFPKSP…LEEPVLKHWE (93 aa). A disulfide bridge links Cys-132 with Cys-188. Residues 204-216 form a connecting peptide region; sequence EPEIPAPMSELTE. Residues 217 to 242 form a helical membrane-spanning segment; that stretch reads TVVCALGLSVGLVGIVVGTIFIIQGL. The Cytoplasmic segment spans residues 243–254; that stretch reads RSGGTSRHPGPL.

It belongs to the MHC class II family.

The protein localises to the membrane. The chain is H-2 class II histocompatibility antigen, I-E alpha chain from Mus musculus (Mouse).